We begin with the raw amino-acid sequence, 226 residues long: Methylamine utilization ferredoxin-type protein MauM (226 aa).

4 consecutive 4Fe-4S ferredoxin-type domains span residues 59–87 (PEPE…LASW), 95–127 (TPYF…PLLT), 136–172 (VAVL…LKQI), and 180–211 (QIPT…LLPR). 16 residues coordinate [4Fe-4S] cluster: C67, C70, C73, C77, C105, C108, C113, C117, C145, C153, C156, C160, C189, C192, C195, and C199.

It functions in the pathway one-carbon metabolism; methylamine degradation. Functionally, involved in electron transfer. The chain is Methylamine utilization ferredoxin-type protein MauM (mauM) from Methylophilus methylotrophus (Bacterium W3A1).